Reading from the N-terminus, the 98-residue chain is Class II hydrophobin 5 (98 aa).

The first 17 residues, 1–17 (MQFSLALVTLLATAVSA), serve as a signal peptide directing secretion. Cystine bridges form between C30–C78, C39–C69, C40–C52, and C79–C90.

It belongs to the cerato-ulmin hydrophobin family.

The protein localises to the secreted. It localises to the cell wall. Its function is as follows. Aerial growth, conidiation, and dispersal of filamentous fungi in the environment rely upon a capability of their secreting small amphipathic proteins called hydrophobins (HPBs) with low sequence identity. Class I can self-assemble into an outermost layer of rodlet bundles on aerial cell surfaces, conferring cellular hydrophobicity that supports fungal growth, development and dispersal; whereas Class II form highly ordered films at water-air interfaces through intermolecular interactions but contribute nothing to the rodlet structure. Does not seem to be important for the ability to cause seedling disease. The polypeptide is Class II hydrophobin 5 (Gibberella moniliformis (Maize ear and stalk rot fungus)).